The primary structure comprises 448 residues: Cysteine--tRNA ligase (448 aa).

A Zn(2+)-binding site is contributed by Cys29. The 'HIGH' region motif lies at 31–41; that stretch reads PTVYDTAHIGN. The segment covering 79-91 has biased composition (basic and acidic residues); it reads ATTGADRGADQAH. The segment at 79-106 is disordered; the sequence is ATTGADRGADQAHRGPLPRRHGPLNAAP. 2 residues coordinate Zn(2+): Cys206 and Glu235. The 'KMSKS' region motif lies at 265-269; it reads RMSKS. Lys268 is an ATP binding site.

This sequence belongs to the class-I aminoacyl-tRNA synthetase family. As to quaternary structure, monomer. Requires Zn(2+) as cofactor.

It is found in the cytoplasm. It catalyses the reaction tRNA(Cys) + L-cysteine + ATP = L-cysteinyl-tRNA(Cys) + AMP + diphosphate. The protein is Cysteine--tRNA ligase (cysS) of Azospirillum brasilense.